A 274-amino-acid polypeptide reads, in one-letter code: Penicillin-insensitive murein endopeptidase (274 aa).

An N-terminal signal peptide occupies residues 1–19 (MKKTVIALLAWFVSSASLA). 3 disulfides stabilise this stretch: Cys-44–Cys-265, Cys-187–Cys-235, and Cys-216–Cys-223. The Zn(2+) site is built by His-110, His-113, Asp-120, Asp-147, His-150, and His-211. Positions 225–274 (DQPLPPPGDGCGAELQSWFEPPKPGTTKPEKKTPPPLPPSCQALLDEHVL) are disordered.

Belongs to the peptidase M74 family. In terms of assembly, dimer. Zn(2+) is required as a cofactor.

It localises to the periplasm. Functionally, murein endopeptidase that cleaves the D-alanyl-meso-2,6-diamino-pimelyl amide bond that connects peptidoglycan strands. Likely plays a role in the removal of murein from the sacculus. The sequence is that of Penicillin-insensitive murein endopeptidase from Salmonella paratyphi C (strain RKS4594).